The following is a 164-amino-acid chain: Thiol peroxidase (164 aa).

A Thioredoxin domain is found at 18–163 (INEGDFAPDF…FDAALAAYKN (146 aa)). Catalysis depends on Cys-60, which acts as the Cysteine sulfenic acid (-SOH) intermediate. A disulfide bond links Cys-60 and Cys-93.

Belongs to the peroxiredoxin family. Tpx subfamily. In terms of assembly, homodimer.

It carries out the reaction a hydroperoxide + [thioredoxin]-dithiol = an alcohol + [thioredoxin]-disulfide + H2O. Its function is as follows. Thiol-specific peroxidase that catalyzes the reduction of hydrogen peroxide and organic hydroperoxides to water and alcohols, respectively. Plays a role in cell protection against oxidative stress by detoxifying peroxides. This is Thiol peroxidase from Staphylococcus aureus (strain COL).